Consider the following 100-residue polypeptide: Urease subunit gamma (100 aa).

This sequence belongs to the urease gamma subunit family. Heterotrimer of UreA (gamma), UreB (beta) and UreC (alpha) subunits. Three heterotrimers associate to form the active enzyme.

The protein localises to the cytoplasm. The catalysed reaction is urea + 2 H2O + H(+) = hydrogencarbonate + 2 NH4(+). Its pathway is nitrogen metabolism; urea degradation; CO(2) and NH(3) from urea (urease route): step 1/1. The chain is Urease subunit gamma from Paenarthrobacter aurescens (strain TC1).